A 397-amino-acid chain; its full sequence is Argininosuccinate synthase (397 aa).

ATP is bound at residue 9 to 17 (AYSGGLDTS). Y87 is an L-citrulline binding site. An ATP-binding site is contributed by G117. The L-aspartate site is built by T119, N123, and D124. N123 is a binding site for L-citrulline. The L-citrulline site is built by R127, S175, S184, E257, and Y269.

This sequence belongs to the argininosuccinate synthase family. Type 1 subfamily. Homotetramer.

It localises to the cytoplasm. The catalysed reaction is L-citrulline + L-aspartate + ATP = 2-(N(omega)-L-arginino)succinate + AMP + diphosphate + H(+). Its pathway is amino-acid biosynthesis; L-arginine biosynthesis; L-arginine from L-ornithine and carbamoyl phosphate: step 2/3. This Dictyoglomus thermophilum (strain ATCC 35947 / DSM 3960 / H-6-12) protein is Argininosuccinate synthase.